We begin with the raw amino-acid sequence, 498 residues long: MASQGTKRSYEQMETGGERQNATEIRASVGRMVGGIGRFYIQMCTELKLSDQEGRLIQNSITIERMVLSAFDERRNRYLEEHPSAGKDPKKTGGPIYRRRDGKWVRELILYDKEEIRRIWRQANNGEDATAGLTHMMIWHSNLNDATYQRTRALVRTGMDPRMCSLMQGSTLPRRSGAAGAAIKGVGTMVMELIRMIKRGINDRNFWRGENGRRTRIAYERMCNILKGKFQTAAQKAMMDQVRESRNPGNAEIEDLIFLARSALILRGSVAHKSCLPACVYGPAVASGYDFEREGYSLVGIDPFRLLQNSQVFSLIRPKENPAHKSQLVWMACHSAAFEDLRVSSFIRGTRVIPRGQLSTRGVQIASNENVEAMDSTTLELRSRYWAIRTRSGGNTNQQRASAGQISVQPTFSVQRNLPFERVTIMAAFKGNTEGRTSDMRTEIIRMMESARPEDVSFQGRGVFELSDEKATNPIVPSFDMSNEGSYFFGDNAEEYDN.

The Unconventional nuclear localization signal signature appears at 1 to 18; sequence MASQGTKRSYEQMETGGE. The tract at residues 1 to 21 is disordered; the sequence is MASQGTKRSYEQMETGGERQN. The Bipartite nuclear localization signal signature appears at 198–216; that stretch reads KRGINDRNFWRGENGRRTR.

Belongs to the influenza viruses nucleoprotein family. Homomultimerizes to form the nucleocapsid. May bind host exportin-1/XPO1. Binds to viral genomic RNA. Protein-RNA contacts are mediated by a combination of electrostatic interactions between positively charged residues and the phosphate backbone and planar interactions between aromatic side chains and bases. Late in virus-infected cells, may be cleaved from a 56-kDa protein to a 53-kDa protein by a cellular caspase. This cleavage might be a marker for the onset of apoptosis in infected cells or have a specific function in virus host interaction.

It localises to the virion. Its subcellular location is the host nucleus. Encapsidates the negative strand viral RNA, protecting it from nucleases. The encapsidated genomic RNA is termed the ribonucleoprotein (RNP) and serves as template for transcription and replication. The RNP needs to be localized in the host nucleus to start an infectious cycle, but is too large to diffuse through the nuclear pore complex. NP comprises at least 2 nuclear localization signals that are responsible for the active RNP import into the nucleus through cellular importin alpha/beta pathway. Later in the infection, nclear export of RNPs are mediated through viral proteins NEP interacting with M1 which binds nucleoproteins. It is possible that nucleoprotein binds directly host exportin-1/XPO1 and plays an active role in RNPs nuclear export. M1 interaction with RNP seems to hide nucleoprotein's nuclear localization signals. Soon after a virion infects a new cell, M1 dissociates from the RNP under acidification of the virion driven by M2 protein. Dissociation of M1 from RNP unmasks nucleoprotein's nuclear localization signals, targeting the RNP to the nucleus. This is Nucleoprotein from Influenza A virus (strain A/Hong Kong/156/1997 H5N1 genotype Gs/Gd).